Here is a 453-residue protein sequence, read N- to C-terminus: tRNA-2-methylthio-N(6)-dimethylallyladenosine synthase (453 aa).

Residues 17–135 enclose the MTTase N-terminal domain; that stretch reads GTFFIETWGC…FPEYLNRAKQ (119 aa). Residues Cys-26, Cys-62, Cys-96, Cys-172, Cys-176, and Cys-179 each coordinate [4Fe-4S] cluster. The region spanning 158 to 388 is the Radical SAM core domain; the sequence is RKSSTKAFVT…VEVVNKSCEK (231 aa). Residues 391-453 enclose the TRAM domain; the sequence is KKYQDRIVKV…LSFSLEGEEV (63 aa).

The protein belongs to the methylthiotransferase family. MiaB subfamily. As to quaternary structure, monomer. It depends on [4Fe-4S] cluster as a cofactor.

The protein localises to the cytoplasm. It carries out the reaction N(6)-dimethylallyladenosine(37) in tRNA + (sulfur carrier)-SH + AH2 + 2 S-adenosyl-L-methionine = 2-methylsulfanyl-N(6)-dimethylallyladenosine(37) in tRNA + (sulfur carrier)-H + 5'-deoxyadenosine + L-methionine + A + S-adenosyl-L-homocysteine + 2 H(+). Its function is as follows. Catalyzes the methylthiolation of N6-(dimethylallyl)adenosine (i(6)A), leading to the formation of 2-methylthio-N6-(dimethylallyl)adenosine (ms(2)i(6)A) at position 37 in tRNAs that read codons beginning with uridine. This chain is tRNA-2-methylthio-N(6)-dimethylallyladenosine synthase, found in Clostridium tetani (strain Massachusetts / E88).